We begin with the raw amino-acid sequence, 472 residues long: Nuclear receptor subfamily 0 group B member 1 (472 aa).

3 consecutive repeat copies span residues 1-67, 68-135, and 136-202. The 4 X 67 AA tandem repeats stretch occupies residues 1–255; sequence MAGEDHPWHG…RPIALKDPQV (255 aa). 3 consecutive short sequence motifs (LXXLL motif) follow at residues 13–17, 80–84, and 148–152; these read LYNLL, LYSML, and LYSLL. The 282-residue stretch at 190 to 471 folds into the NR LBD domain; sequence QSTQAMAFLY…DMMLEMLCAK (282 aa). A 4; truncated repeat occupies 203 to 255; it reads VCCEEQPQQSSVASDTPVRADQTPAAPQEQPRAPWWDTSSGVQRPIALKDPQV. Disordered stretches follow at residues 214–237 and 326–345; these read VASD…RAPW and RRQE…EQPQ. Residues 463–468 carry the AF-2 motif motif; that stretch reads MMLEML.

Belongs to the nuclear hormone receptor family. NR0 subfamily. As to quaternary structure, homodimer. Interacts with NR5A1, NR5A2, NR0B2 and with COPS2. Interacts with ESRRB; represses ESRRB activity at the GATA6 promoter.

Its subcellular location is the nucleus. The protein resides in the cytoplasm. Functionally, nuclear receptor that lacks a DNA-binding domain and acts as a corepressor that inhibits the transcriptional activity of other nuclear receptors through heterodimeric interactions. Component of a cascade required for the development of the hypothalamic-pituitary-adrenal-gonadal axis. May also have a role in the development of the embryo and in the maintenance of embryonic stem cell pluripotency. This Rattus norvegicus (Rat) protein is Nuclear receptor subfamily 0 group B member 1 (Nr0b1).